The primary structure comprises 140 residues: MSVLSEFKAFAVKGNVVDLAVGVIIGGAFGKIVESLVGDVIMPIVSKIFGGLDFSNYFIPLAGQTATTLVEAKKAGAVLAYGSFITVAINFMILAFIIFMMIKQINRLQSAPAPAPAPAEPPPPAEDIVLLREIRDSLKR.

Transmembrane regions (helical) follow at residues 21 to 41 (VGVI…GDVI) and 82 to 102 (GSFI…FMMI).

The protein belongs to the MscL family. Homopentamer.

The protein resides in the cell inner membrane. Functionally, channel that opens in response to stretch forces in the membrane lipid bilayer. May participate in the regulation of osmotic pressure changes within the cell. The polypeptide is Large-conductance mechanosensitive channel (Leptothrix cholodnii (strain ATCC 51168 / LMG 8142 / SP-6) (Leptothrix discophora (strain SP-6))).